Consider the following 158-residue polypeptide: Single-stranded DNA-binding protein 2 (158 aa).

One can recognise an SSB domain in the interval 1–107; that stretch reads MNETIVCVVG…IDALAVGHDL (107 aa). A disordered region spans residues 109–158; sequence RGTSAFRRPSAKDGEAGVSPAARPEPNWETEPGSQPSVEHQPQPEPAGVT.

Homotetramer.

In Streptomyces avermitilis (strain ATCC 31267 / DSM 46492 / JCM 5070 / NBRC 14893 / NCIMB 12804 / NRRL 8165 / MA-4680), this protein is Single-stranded DNA-binding protein 2 (ssb2).